The following is a 1248-amino-acid chain: MAKKFNYKLPSMVALTLVGSAVTAHQVQAAETTQDQTTNKNVLDSNKVKATTEQAKAEVKNPTQNISGTQVYQDPAIVQPKTANNKTGNAQVSQKVDTAQVNGDTRANQSATTNNTQPVAKSTSTTAPKTNTNVTNAGYSLVDDEDDNSEHQINPELIKSAAKPAALETQYKAAAPKAKTEATPKVTTFSASAQPRSVAATPKTSLPKYKPQVNSSINDYIRKNNLKAPKIEEDYTSYFPKYAYRNGVGRPEGIVVHDTANDRSTINGEISYMKNNYQNAFVHAFVDGDRIIETAPTDYLSWGVGAVGNPRFINVEIVHTHDYASFARSMNNYADYAATQLQYYGLKPDSAEYDGNGTVWTHYAVSKYLGGTDHADPHGYLRSHNYSYDQLYDLINEKYLIKMGKVAPWGTQFTTTPTTPSKPTTPSKPSTGKLTVAANNGVAQIKPTNSGLYTTVYDKTGKATNEVQKTFAVSKTATLGNQKFYLVQDYNSGNKFGWVKEGDVVYNTAKSPVNVNQSYSIKSGTKLYTVPWGTSKQVAGSVSGSGNQTFKASKQQQIDKSIYLYGSVNGKSGWVSKAYLVDTAKPTPTPIPKPSTPTTNNKLTVSSLNGVAQINAKNNGLFTTVYDKTGKPTKEVQKTFAVTKEASLGGNKFYLVKDYNSPTLIGWVKQGDVIYNNAKSPVNVMQTYTVKPGTKLYSVPWGTYKQEAGAVSGTGNQTFKATKQQQIDKSIYLFGTVNGKSGWVSKAYLAVPAAPKKAVAQPKTAVKAYTVTKPQTTQTVSKIAQVKPNNTGIRASVYEKTAKNGAKYADRTFYVTKERAHGNETYVLLNNTSHNIPLGWFNVKDLNVQNLGKEVKTTQKYTVNKSNNGLSMVPWGTKNQVILTGNNIAQGTFNATKQVSVGKDVYLYGTINNRTGWVNAKDLTAPTAVKPTTSAAKDYNYTYVIKNGNGYYYVTPNSDTAKYSLKAFNEQPFAVVKEQVINGQTWYYGKLSNGKLAWIKSTDLAKELIKYNQTGMTLNQVAQIQAGLQYKPQVQRVPGKWTDANFNDVKHAMDTKRLAQDPALKYQFLRLDQPQNISIDKINQFLKGKGVLENQGAAFNKAAQMYGINEVYLISHALLETGNGTSQLAKGADVVNNKVVTNSNTKYHNVFGIAAYDNDPLREGIKYAKQAGWDTVSKAIVGGAKFIGNSYVKAGQNTLYKMRWNPAHPGTHQYATDVDWANINAKIIKGYYDKIGEVGKYFDIPQYK.

Residues 1-29 (MAKKFNYKLPSMVALTLVGSAVTAHQVQA) form the signal peptide. The interval 103-134 (GDTRANQSATTNNTQPVAKSTSTTAPKTNTNV) is disordered. An N-acetylmuramoyl-L-alanine amidase region spans residues 191 to 767 (ASAQPRSVAA…AVAQPKTAVK (577 aa)). 7 consecutive GW domains span residues 435–509 (TVAA…YNTA), 511–585 (SPVN…DTAK), 604–678 (TVSS…YNNA), 680–754 (SPVN…VPAA), 776–851 (TTQT…VQNL), 853–928 (KEVK…APTA), and 935–1009 (AAKD…KELI). The tract at residues 768–1248 (AYTVTKPQTT…GKYFDIPQYK (481 aa)) is endo-beta-N-acetylglucosaminidase.

In the N-terminal section; belongs to the N-acetylmuramoyl-L-alanine amidase 2 family. This sequence in the C-terminal section; belongs to the glycosyl hydrolase 73 family. As to quaternary structure, oligomer; forms a ring structure at the cell surface which is important for efficient partitioning of daughter cells after cell division. Undergoes proteolytic processing to generate the two extracellular lytic enzymes, probably at the septal region on the cell surface.

It localises to the secreted. The catalysed reaction is Hydrolyzes the link between N-acetylmuramoyl residues and L-amino acid residues in certain cell-wall glycopeptides.. The enzyme catalyses an N(4)-(oligosaccharide-(1-&gt;3)-[oligosaccharide-(1-&gt;6)]-beta-D-Man-(1-&gt;4)-beta-D-GlcNAc-(1-&gt;4)-alpha-D-GlcNAc)-L-asparaginyl-[protein] + H2O = an oligosaccharide-(1-&gt;3)-[oligosaccharide-(1-&gt;6)]-beta-D-Man-(1-&gt;4)-D-GlcNAc + N(4)-(N-acetyl-beta-D-glucosaminyl)-L-asparaginyl-[protein]. Functionally, endohydrolysis of the di-N-acetylchitobiosyl unit in high-mannose glycopeptides and glycoproteins containing the -[(Man)5(GlcNAc)2]-Asn structure. One N-acetyl-D-glucosamine residue remains attached to the protein; the rest of the oligosaccharide is released intact. Cleaves the peptidoglycan connecting the daughter cells at the end of the cell division cycle, resulting in the separation of the two newly divided cells. Acts as an autolysin in penicillin-induced lysis. The chain is Bifunctional autolysin (atl) from Staphylococcus aureus (strain Mu50 / ATCC 700699).